We begin with the raw amino-acid sequence, 206 residues long: Phosphoserine phosphatase (206 aa).

Residue aspartate 7 is the Nucleophile of the active site. Residues aspartate 7 and aspartate 9 each contribute to the Mg(2+) site. Aspartate 9 acts as the Proton donor in catalysis. Residues glutamate 16, arginine 52, 95–96, and lysine 140 contribute to the substrate site; that span reads SG. Aspartate 163 is a binding site for Mg(2+). Asparagine 166 lines the substrate pocket.

It belongs to the HAD-like hydrolase superfamily. SerB family. The cofactor is Mg(2+).

It carries out the reaction O-phospho-L-serine + H2O = L-serine + phosphate. It catalyses the reaction O-phospho-D-serine + H2O = D-serine + phosphate. The protein operates within amino-acid biosynthesis; L-serine biosynthesis; L-serine from 3-phospho-D-glycerate: step 3/3. The protein is Phosphoserine phosphatase of Wolinella succinogenes (strain ATCC 29543 / DSM 1740 / CCUG 13145 / JCM 31913 / LMG 7466 / NCTC 11488 / FDC 602W) (Vibrio succinogenes).